The following is a 317-amino-acid chain: MANEEELQTAESAFVTGARRYSNDYSESESSSKHSGCSTPVEGTPAEAATTIGARASGGSTTWQRLRQLLMERGSDVHLPVTEIHLKSQEWFGDFITKHEVPRKVFHSSIGFFTLALYVRDVDYRNVRLPLIVGFVHVLLLDVIRLHWPAFNTLYCQVTGLLMRKKEVHTYNGVLWYLLGLIFAFSFFSKDVALVSLFLLSWCDTAASTVGRLYGHLTPRISRNKSLAGSLAAFVVGVISCAVFYGYFVPAYSHVNHPGEIMWNPETSRLSLVQLSLLGGFVASLSEGIDLFNWDDNFTIPVLSAIFMHTIIAFSQR.

A disordered region spans residues 1 to 44 (MANEEELQTAESAFVTGARRYSNDYSESESSSKHSGCSTPVEGT). Residues 1–130 (MANEEELQTA…DVDYRNVRLP (130 aa)) lie on the Lumenal side of the membrane. Positions 23-38 (NDYSESESSSKHSGCS) are enriched in low complexity. The chain crosses the membrane as a helical span at residues 131 to 151 (LIVGFVHVLLLDVIRLHWPAF). At 152–167 (NTLYCQVTGLLMRKKE) the chain is on the cytoplasmic side. A helical membrane pass occupies residues 168–188 (VHTYNGVLWYLLGLIFAFSFF). The Lumenal portion of the chain corresponds to 189–190 (SK). A helical membrane pass occupies residues 191–211 (DVALVSLFLLSWCDTAASTVG). At 212 to 230 (RLYGHLTPRISRNKSLAGS) the chain is on the cytoplasmic side. A helical membrane pass occupies residues 231 to 251 (LAAFVVGVISCAVFYGYFVPA). The Lumenal segment spans residues 252–271 (YSHVNHPGEIMWNPETSRLS). Residues 272–292 (LVQLSLLGGFVASLSEGIDLF) form a helical membrane-spanning segment. Position 293 (Asn-293) is a topological domain, cytoplasmic. The chain crosses the membrane as a helical span at residues 294-314 (WDDNFTIPVLSAIFMHTIIAF). Topologically, residues 315 to 317 (SQR) are lumenal.

The protein belongs to the DGK1 family. Ca(2+) is required as a cofactor. The cofactor is Mg(2+).

Its subcellular location is the endoplasmic reticulum membrane. The protein resides in the nucleus membrane. It carries out the reaction a 1,2-diacyl-sn-glycerol + CTP = a 1,2-diacyl-sn-glycero-3-phosphate + CDP + H(+). In terms of biological role, CTP-dependent diacylglycerol kinase that catalyzes the phosphorylation of diacylglycerol (DAG) to phosphatidate (PA). Controls phosphatidate levels at the nuclear envelope. May be involved in vesicle trafficking between the endoplasmic reticulum and the Golgi apparatus. This is CTP-dependent diacylglycerol kinase 1 (DGK1) from Eremothecium gossypii (strain ATCC 10895 / CBS 109.51 / FGSC 9923 / NRRL Y-1056) (Yeast).